A 453-amino-acid polypeptide reads, in one-letter code: Homogentisate 1,2-dioxygenase (453 aa).

Residue H306 is the Proton acceptor of the active site. H349 and E355 together coordinate Fe cation. Residues Y364 and H385 each coordinate homogentisate. H385 lines the Fe cation pocket.

Belongs to the homogentisate dioxygenase family. As to quaternary structure, hexamer; dimer of trimers. The cofactor is Fe cation.

The enzyme catalyses homogentisate + O2 = 4-maleylacetoacetate + H(+). It functions in the pathway amino-acid degradation; L-phenylalanine degradation; acetoacetate and fumarate from L-phenylalanine: step 4/6. Involved in the catabolism of homogentisate (2,5-dihydroxyphenylacetate or 2,5-OH-PhAc), a central intermediate in the degradation of phenylalanine and tyrosine. Catalyzes the oxidative ring cleavage of the aromatic ring of homogentisate to yield maleylacetoacetate. This chain is Homogentisate 1,2-dioxygenase, found in Rhizobium etli (strain CIAT 652).